Consider the following 484-residue polypeptide: tRNA-2-methylthio-N(6)-dimethylallyladenosine synthase (484 aa).

Residues 36 to 153 (GKLYIKTHGC…LPELIRARRE (118 aa)) form the MTTase N-terminal domain. The [4Fe-4S] cluster site is built by C45, C82, C116, C190, C194, and C197. The Radical SAM core domain occupies 176–415 (RAEGPSAFVS…HISAHAASIS (240 aa)). One can recognise a TRAM domain in the interval 416–479 (QSMVGSVQRV…SNSLRGRIQL (64 aa)). A disordered region spans residues 428–450 (EGPSRRDPNELTGKSENMRPVNF).

Belongs to the methylthiotransferase family. MiaB subfamily. As to quaternary structure, monomer. The cofactor is [4Fe-4S] cluster.

Its subcellular location is the cytoplasm. It carries out the reaction N(6)-dimethylallyladenosine(37) in tRNA + (sulfur carrier)-SH + AH2 + 2 S-adenosyl-L-methionine = 2-methylsulfanyl-N(6)-dimethylallyladenosine(37) in tRNA + (sulfur carrier)-H + 5'-deoxyadenosine + L-methionine + A + S-adenosyl-L-homocysteine + 2 H(+). Functionally, catalyzes the methylthiolation of N6-(dimethylallyl)adenosine (i(6)A), leading to the formation of 2-methylthio-N6-(dimethylallyl)adenosine (ms(2)i(6)A) at position 37 in tRNAs that read codons beginning with uridine. This is tRNA-2-methylthio-N(6)-dimethylallyladenosine synthase from Xanthomonas oryzae pv. oryzae (strain PXO99A).